We begin with the raw amino-acid sequence, 247 residues long: Uridylate kinase (247 aa).

17 to 20 (KFSG) is an ATP binding site. UMP is bound at residue Gly59. Gly60 and Arg64 together coordinate ATP. Residues Asp79 and 140–147 (TGNPFFTT) contribute to the UMP site. Residues Thr167, Tyr173, and Asp176 each coordinate ATP.

This sequence belongs to the UMP kinase family. As to quaternary structure, homohexamer.

It localises to the cytoplasm. The enzyme catalyses UMP + ATP = UDP + ADP. The protein operates within pyrimidine metabolism; CTP biosynthesis via de novo pathway; UDP from UMP (UMPK route): step 1/1. Inhibited by UTP. Functionally, catalyzes the reversible phosphorylation of UMP to UDP. The chain is Uridylate kinase from Legionella pneumophila (strain Paris).